Here is a 200-residue protein sequence, read N- to C-terminus: dITP/XTP pyrophosphatase (200 aa).

19 to 24 (TSNAGK) contributes to the substrate binding site. 2 residues coordinate Mg(2+): E49 and D78. Catalysis depends on D78, which acts as the Proton acceptor. Substrate is bound by residues S79, 158 to 161 (FGYD), K181, and 186 to 187 (HR).

This sequence belongs to the HAM1 NTPase family. In terms of assembly, homodimer. Mg(2+) is required as a cofactor.

It catalyses the reaction XTP + H2O = XMP + diphosphate + H(+). It carries out the reaction dITP + H2O = dIMP + diphosphate + H(+). The catalysed reaction is ITP + H2O = IMP + diphosphate + H(+). Its function is as follows. Pyrophosphatase that catalyzes the hydrolysis of nucleoside triphosphates to their monophosphate derivatives, with a high preference for the non-canonical purine nucleotides XTP (xanthosine triphosphate), dITP (deoxyinosine triphosphate) and ITP. Seems to function as a house-cleaning enzyme that removes non-canonical purine nucleotides from the nucleotide pool, thus preventing their incorporation into DNA/RNA and avoiding chromosomal lesions. This is dITP/XTP pyrophosphatase from Deinococcus radiodurans (strain ATCC 13939 / DSM 20539 / JCM 16871 / CCUG 27074 / LMG 4051 / NBRC 15346 / NCIMB 9279 / VKM B-1422 / R1).